We begin with the raw amino-acid sequence, 440 residues long: Glutamyl-tRNA reductase (440 aa).

Residues 40-43 (TCNR), Ser100, 105-107 (ERE), and Gln111 each bind substrate. The Nucleophile role is filled by Cys41. 181-186 (GTGAYA) is an NADP(+) binding site.

Belongs to the glutamyl-tRNA reductase family. In terms of assembly, homodimer.

It carries out the reaction (S)-4-amino-5-oxopentanoate + tRNA(Glu) + NADP(+) = L-glutamyl-tRNA(Glu) + NADPH + H(+). The protein operates within porphyrin-containing compound metabolism; protoporphyrin-IX biosynthesis; 5-aminolevulinate from L-glutamyl-tRNA(Glu): step 1/2. Its function is as follows. Catalyzes the NADPH-dependent reduction of glutamyl-tRNA(Glu) to glutamate 1-semialdehyde (GSA). This is Glutamyl-tRNA reductase from Renibacterium salmoninarum (strain ATCC 33209 / DSM 20767 / JCM 11484 / NBRC 15589 / NCIMB 2235).